We begin with the raw amino-acid sequence, 305 residues long: tRNA dimethylallyltransferase 1 (305 aa).

10–17 (GPTASGKT) provides a ligand contact to ATP. Residue 12 to 17 (TASGKT) coordinates substrate. The interaction with substrate tRNA stretch occupies residues 35-38 (DSRQ).

Belongs to the IPP transferase family. As to quaternary structure, monomer. Mg(2+) is required as a cofactor.

It catalyses the reaction adenosine(37) in tRNA + dimethylallyl diphosphate = N(6)-dimethylallyladenosine(37) in tRNA + diphosphate. Catalyzes the transfer of a dimethylallyl group onto the adenine at position 37 in tRNAs that read codons beginning with uridine, leading to the formation of N6-(dimethylallyl)adenosine (i(6)A). The sequence is that of tRNA dimethylallyltransferase 1 from Syntrophus aciditrophicus (strain SB).